We begin with the raw amino-acid sequence, 391 residues long: Galactarate dehydratase (D-threo-forming) (391 aa).

Position 15 (arginine 15) interacts with substrate. Residues aspartate 42 and histidine 45 each contribute to the Mg(2+) site. Tyrosine 89 serves as a coordination point for substrate. Tyrosine 90 functions as the Proton donor in the catalytic mechanism. The active-site Proton acceptor is tyrosine 164. Mg(2+) contacts are provided by aspartate 193, glutamate 221, and histidine 246. Threonine 296 is a binding site for substrate. Threonine 297 is a binding site for Mg(2+). Residue arginine 385 participates in substrate binding.

It belongs to the mandelate racemase/muconate lactonizing enzyme family. Mg(2+) serves as cofactor.

The enzyme catalyses galactarate = (2S,3R)-dihydroxy-5-oxohexanedioate + H2O. In terms of biological role, catalyzes the regioselective dehydration of galactarate into 2-keto-D-threo-4,5-dihydroxyadipate ((2S,3R)-dihydroxy-5-oxohexanedioate). Is not active on other acid sugars. This chain is Galactarate dehydratase (D-threo-forming), found in Oceanobacillus iheyensis (strain DSM 14371 / CIP 107618 / JCM 11309 / KCTC 3954 / HTE831).